The sequence spans 91 residues: UPF0250 protein NGK_1021 (91 aa).

This sequence belongs to the UPF0250 family.

The polypeptide is UPF0250 protein NGK_1021 (Neisseria gonorrhoeae (strain NCCP11945)).